The primary structure comprises 224 residues: LexA repressor (224 aa).

Residues 41 to 61 constitute a DNA-binding region (H-T-H motif); the sequence is MREIGDAVGLSSLSSVTHQLN. Catalysis depends on for autocatalytic cleavage activity residues S148 and K185.

Belongs to the peptidase S24 family. In terms of assembly, homodimer.

It catalyses the reaction Hydrolysis of Ala-|-Gly bond in repressor LexA.. Represses a number of genes involved in the response to DNA damage (SOS response), including recA and lexA. In the presence of single-stranded DNA, RecA interacts with LexA causing an autocatalytic cleavage which disrupts the DNA-binding part of LexA, leading to derepression of the SOS regulon and eventually DNA repair. The chain is LexA repressor from Leifsonia xyli subsp. xyli (strain CTCB07).